The following is a 126-amino-acid chain: Holo-[acyl-carrier-protein] synthase (126 aa).

Mg(2+) is bound by residues Asp8 and Glu57.

This sequence belongs to the P-Pant transferase superfamily. AcpS family. Mg(2+) serves as cofactor.

The protein resides in the cytoplasm. The enzyme catalyses apo-[ACP] + CoA = holo-[ACP] + adenosine 3',5'-bisphosphate + H(+). In terms of biological role, transfers the 4'-phosphopantetheine moiety from coenzyme A to a Ser of acyl-carrier-protein. In Trichlorobacter lovleyi (strain ATCC BAA-1151 / DSM 17278 / SZ) (Geobacter lovleyi), this protein is Holo-[acyl-carrier-protein] synthase.